We begin with the raw amino-acid sequence, 58 residues long: Bestoxin (58 aa).

An LCN-type CS-alpha/beta domain is found at 3–58; it reads VPGNYPLDKDGNTYTCLELGENKDCQKVCKLHGVQYGYCYAFSCWCKEYLDDKDSV. 3 cysteine pairs are disulfide-bonded: C18–C41, C27–C46, and C31–C48.

Expressed by the venom gland.

The protein resides in the secreted. Its function is as follows. Beta toxins bind voltage-independently at site-4 of sodium channels (Nav) and shift the voltage of activation toward more negative potentials thereby affecting sodium channel activation and promoting spontaneous and repetitive firing. In mice, causes intense writhing. The chain is Bestoxin from Parabuthus transvaalicus (Transvaal thick-tailed scorpion).